We begin with the raw amino-acid sequence, 1217 residues long: Endonuclease YhcR (1217 aa).

Residues 1-46 (MLSVEMISRQNRCHYVYKGGNMMRRILHIVLITALMFLNVMYTFEA) form the signal peptide. The region spanning 376–517 (GEYEGIVDRV…KKDQKGIWNE (142 aa)) is the TNase-like domain. Active-site residues include Arg404, Glu412, and Arg460. The phosphoesterase stretch occupies residues 590–828 (LRILSMNDLH…VIFAAHNHQV (239 aa)). Asp597, His599, Asp647, Asn680, His792, and His824 together coordinate a divalent metal cation. A 5'-nucleotidase region spans residues 829–1085 (VNGEVNGKLI…AYTKEGRIKL (257 aa)). Residues Phe965 and 1035 to 1042 (FMATATGA) contribute to the substrate site. The tract at residues 1087–1142 (EASDIEDPVTEDPITEEPGDDPGTEDPIKEDPRPGEDLPDIKETPGTAPVHQLPPS) is disordered. Positions 1089–1110 (SDIEDPVTEDPITEEPGDDPGT) are enriched in acidic residues. The span at 1112 to 1129 (DPIKEDPRPGEDLPDIKE) shows a compositional bias: basic and acidic residues. The short motif at 1182–1186 (LPDTS) is the LPXTG sorting signal element. Thr1185 bears the Pentaglycyl murein peptidoglycan amidated threonine mark. Residues 1186–1217 (SAGYYNFMVIGAAVTLSGTYLYVRRKRSASRT) constitute a propeptide, removed by sortase.

In the C-terminal section; belongs to the 5'-nucleotidase family. Ca(2+) is required as a cofactor. It depends on Mn(2+) as a cofactor.

It localises to the secreted. The protein resides in the cell wall. With respect to regulation, requires a minimum of 0.1 mM of calcium for a significant activity. Maximal activity was observed with concentrations of calcium between 1 to 5 mM. Is 10-fold less active with the corresponding concentrations of manganese. Inhibited by NaCl at concentrations of 100 mM and higher. Sugar-nonspecific endonuclease that yields nucleotide 3'-monophosphate products. No 5'-nucleotidase activity was detected, using 5'-AMP as the substrate, in the presence of diverse divalent metals and with various pH values. The polypeptide is Endonuclease YhcR (yhcR) (Bacillus subtilis (strain 168)).